A 1082-amino-acid polypeptide reads, in one-letter code: Sodium/potassium exporting P-type ATPase 2 (1082 aa).

Residues 1–75 are Cytoplasmic-facing; it reads MSSINTNVAE…GANTLGDGDK (75 aa). A helical transmembrane segment spans residues 76 to 96; that stretch reads ISLTKIIAHQVCNAMILVLII. At 97-98 the chain is on the extracellular side; that stretch reads SM. Residues 99–119 form a helical membrane-spanning segment; that stretch reads VIALAIKDWISGGVIGFVVLI. Over 120 to 308 the chain is Cytoplasmic; that stretch reads NISVGFVQEY…VGTPLQRKLS (189 aa). The chain crosses the membrane as a helical span at residues 309–329; it reads WLAIFLFWGCRYFCNYCNGIP. Topologically, residues 330-336 are extracellular; sequence KNRVNKE. A helical transmembrane segment spans residues 337–357; it reads VAIYAICVALSMIPSALIVVL. Residues 358–807 lie on the Cytoplasmic side of the membrane; that stretch reads TITMAVGAQV…RMSSNIQKFV (450 aa). Asp393 functions as the 4-aspartylphosphate intermediate in the catalytic mechanism. Asp393 and Thr395 together coordinate Mg(2+). Residues Thr395, Glu499, Lys552, Arg604, Thr664, Gly665, Asp666, Arg723, and Lys729 each contribute to the ATP site. Asp748 is a Mg(2+) binding site. Asn751 serves as a coordination point for ATP. A helical transmembrane segment spans residues 808 to 828; the sequence is LQLLAENVAQALYLMVGLAFI. The Extracellular segment spans residues 829–832; sequence DDSG. Residues 833 to 853 form a helical membrane-spanning segment; the sequence is LSVFPLSPVEVLWILVVTSCF. At 854 to 884 the chain is on the cytoplasmic side; the sequence is PAMDLGQERASDDILEESPNSTIFTWEVIID. Residues 885–905 form a helical membrane-spanning segment; it reads MIVYGFWMAVCCLVCFVIIVY. Residues 906–935 lie on the Extracellular side of the membrane; sequence GEGDPYLGVNCNKSSSSNSDVCELVFRGRS. A helical membrane pass occupies residues 936 to 956; that stretch reads ASFATMTWCALILAWECIHPY. Residues 957–983 lie on the Cytoplasmic side of the membrane; sequence NSLFYMRQDTDHPWWKQTVIDLWDNQF. A helical membrane pass occupies residues 984-1004; it reads LFWSVAIGFISVFPVVYIPVI. The Extracellular segment spans residues 1005-1007; sequence NTK. The chain crosses the membrane as a helical span at residues 1008-1028; sequence VFLHGPIGYEWGLAVGFSILF. Topologically, residues 1029–1082 are cytoplasmic; that stretch reads LAGSELWKWIKRIHKRKANKKAKNPEYELERSDPFKKYASFSRSNTMDRPELMV.

It belongs to the cation transport ATPase (P-type) (TC 3.A.3) family. Type IID subfamily. Mg(2+) is required as a cofactor. In terms of processing, the active site is phosphorylated in presence of sodium or potassium and in conditions of higher pH. Not phosphorylated in presence of calcium ions.

Its subcellular location is the cell membrane. It catalyses the reaction Na(+)(in) + ATP + H2O = Na(+)(out) + ADP + phosphate + H(+). The enzyme catalyses K(+)(in) + ATP + H2O = K(+)(out) + ADP + phosphate + H(+). In terms of biological role, catalyzes the hydrolysis of ATP coupled with the export of sodium and potassium from the cell. May be an inefficient sodium exporter. May transport other cations such as lithium. Sodium/potassium efflux ATPases are involved in salt tolerance and maintaining the membrane potential across the plasma membrane in high salinity (Na+) or alkaline (K+) environments. The sequence is that of Sodium/potassium exporting P-type ATPase 2 from Schwanniomyces occidentalis (Yeast).